Consider the following 610-residue polypeptide: MTIKFLSESTINRIAAGEVIERPASVVKELVENAVDASSTKIDIVLERAGKNLIIISDDGIGMTDKELEIAVERHTTSKFDESDFLNINTFGFRGEALPSIAAISKMLITSKKRDADKAFQIKLIGGNEKQVTISVHNEGTKIEIRDLFFATPARLKFLRADKTELAATVDVVKKIALAHPKISFSLTHDGKNLLKLKGQNKDAETNLKQRIIDVIGDDFIKNAAYIDFKTPDFSICGYTSSPTYNRASSEDQFLFINNRSVKDKLLQVALRVAYQDYLARDRYPICAIFLQIDPQLVDVNVHPAKAEVRFHDPNYVRNLLIEAIKNALTNKSHVTSTTIASDALELFKNPLVNKQSPVSKVINVNSKSADYRPTTHSTLNTVPQNHVCQKLIDTLSHAKIEQEVENRIEHEQQTRKQYKLGAAKAQLHTTYIISQTEDSIVITDQHAAHERLGYEKIKDYLKTEELIKQRLLIPEIVELLNEKKADCLYDHREKLYKLGLTLEKFGEKSIIVTEIPNILGDVNVQKLIQDLADHLSDFGKNIALTELIEHVTETYACHYSIRAGRKLSADEMNALLRQMENTPLSGQCNHGRPTYIELKLKDIERLFGR.

The protein belongs to the DNA mismatch repair MutL/HexB family.

Functionally, this protein is involved in the repair of mismatches in DNA. It is required for dam-dependent methyl-directed DNA mismatch repair. May act as a 'molecular matchmaker', a protein that promotes the formation of a stable complex between two or more DNA-binding proteins in an ATP-dependent manner without itself being part of a final effector complex. This is DNA mismatch repair protein MutL from Rickettsia africae (strain ESF-5).